Reading from the N-terminus, the 528-residue chain is Tyrosine--tRNA ligase, cytoplasmic (528 aa).

Tyr39 provides a ligand contact to L-tyrosine. The 'HIGH' region signature appears at 44-52 (TTGKPHVAY). 4 residues coordinate L-tyrosine: Tyr166, Gln170, Asp173, and Gln188. The 'KMSKS' region signature appears at 222 to 226 (KMSSS). Residues 242–247 (KKKLKK) carry the Nuclear localization signal motif. The interval 332 to 362 (EMKKLSNDAYPDASKQKSVPKGSTKNSGTEE) is disordered. Residues 364-468 (DPSLLDLRVG…SGSAPGERIY (105 aa)) enclose the tRNA-binding domain.

Belongs to the class-I aminoacyl-tRNA synthetase family. Homodimer.

Its subcellular location is the cytoplasm. The protein localises to the nucleus. The catalysed reaction is tRNA(Tyr) + L-tyrosine + ATP = L-tyrosyl-tRNA(Tyr) + AMP + diphosphate + H(+). Its function is as follows. Catalyzes the attachment of tyrosine to tRNA(Tyr) in a two-step reaction: tyrosine is first activated by ATP to form Tyr-AMP and then transferred to the acceptor end of tRNA(Tyr). This chain is Tyrosine--tRNA ligase, cytoplasmic (yars1), found in Xenopus laevis (African clawed frog).